A 136-amino-acid polypeptide reads, in one-letter code: Large ribosomal subunit protein uL16 (136 aa).

The protein belongs to the universal ribosomal protein uL16 family. As to quaternary structure, part of the 50S ribosomal subunit.

Binds 23S rRNA and is also seen to make contacts with the A and possibly P site tRNAs. The sequence is that of Large ribosomal subunit protein uL16 from Vibrio campbellii (strain ATCC BAA-1116).